We begin with the raw amino-acid sequence, 765 residues long: Amyloid beta precursor like protein 2 (765 aa).

The first 31 residues, 1–31 (MAATGTAAAAATGKLLVLLLLGLTAPAAALA), serve as a signal peptide directing secretion. Residues 32–695 (GYIEALAANA…LREDFSLSSS (664 aa)) are Extracellular-facing. The segment at 46–139 (AVAEPQIAMF…PFKCLVGEFV (94 aa)) is GFLD subdomain. An E1 domain is found at 46–205 (AVAEPQIAMF…HGTEYVCCPQ (160 aa)). 6 disulfides stabilise this stretch: Cys-56/Cys-80, Cys-91/Cys-133, Cys-116/Cys-123, Cys-149/Cys-203, Cys-160/Cys-190, and Cys-174/Cys-202. The tract at residues 147 to 205 (ENCQFFHQERMEVCEKHQRWHTVVKEACLTEGMTLYSYGMLLPCGVDQFHGTEYVCCPQ) is cuBD subdomain. Residues His-163, His-167, and Tyr-184 each contribute to the Cu cation site. The interval 211–301 (SDSTMSKEEE…EPSSDGTISD (91 aa)) is disordered. Ser-216 carries the post-translational modification Phosphoserine. 2 stretches are compositionally biased toward acidic residues: residues 218 to 231 (EEEE…EEDY) and 240 to 271 (TEAD…EVVE). Basic and acidic residues predominate over residues 272–284 (DRDYYYDSFKGDD). The BPTI/Kunitz inhibitor domain maps to 308-366 (VKAVCSQEAMTGPCRAVMPRWYFDLSKGKCVRFIYGGCGGNRNNFESEDYCMAVCKTMI). Disulfide bonds link Cys-312–Cys-362, Cys-321–Cys-345, and Cys-337–Cys-358. Positions 375-566 (DVDVYFETSA…QEIQEEIDEL (192 aa)) constitute an E2 domain. A Phosphoserine modification is found at Ser-592. The interval 597–616 (EIPPFHPFHPFPSLSENEDT) is disordered. The O-linked (Xyl...) (chondroitin sulfate) serine glycan is linked to Ser-628. A helical membrane pass occupies residues 696 to 718 (ALIGLLVIAVAIATVIVISLVML). Topologically, residues 719–765 (RKRQYGTISHGIVEVHPMLTPEERHLNKMQNHGYENPTYKYLEQMQI) are cytoplasmic. Residues 751 to 765 (GYENPTYKYLEQMQI) form an interaction with DAB2 region. Residues 752–757 (YENPTY) carry the NPXY motif motif.

This sequence belongs to the APP family. Interacts with CPEB1. Interacts (via NPXY motif) with DAB2 (via PID domain); the interaction is impaired by tyrosine phosphorylation of the NPXY motif. Interacts (via cytoplasmic domain) with APBB2/FE65L. Interacts (via intracellular domain) with APBB3/FE65L2.

Its subcellular location is the membrane. Its function is as follows. May play a role in the regulation of hemostasis. The soluble form may have inhibitory properties towards coagulation factors. May interact with cellular G-protein signaling pathways. May bind to the DNA 5'-GTCACATG-3'(CDEI box). Inhibits trypsin, chymotrypsin, plasmin, factor XIA and plasma and glandular kallikrein. Modulates the Cu/Zn nitric oxide-catalyzed autodegradation of GPC1 heparan sulfate side chains in fibroblasts. The protein is Amyloid beta precursor like protein 2 of Rattus norvegicus (Rat).